Consider the following 200-residue polypeptide: Elongation factor Ts (200 aa).

Positions 80–83 are involved in Mg(2+) ion dislocation from EF-Tu; that stretch reads TDFV.

This sequence belongs to the EF-Ts family.

Its subcellular location is the cytoplasm. Functionally, associates with the EF-Tu.GDP complex and induces the exchange of GDP to GTP. It remains bound to the aminoacyl-tRNA.EF-Tu.GTP complex up to the GTP hydrolysis stage on the ribosome. The protein is Elongation factor Ts of Caldanaerobacter subterraneus subsp. tengcongensis (strain DSM 15242 / JCM 11007 / NBRC 100824 / MB4) (Thermoanaerobacter tengcongensis).